The sequence spans 311 residues: MSTYVNDMWPGSPQEKDSPSTSRSGGSSRLSSRSRSRSFSRSSRSHSRVSSRFSSRSRCRRSRSRSRSRRRHQRKYRRYSRSYSRSRSRSRNRRYRERRYGFSRRYYRSPSRSRSRSRSRSRGRSYCGRAYAIARGQRYYGFGRTVYPEEHSRWRDRSRTRSRSRTPFRLSEKERMELLEIAKANAAKALGTTSIDLPASLRTVPVAKETSRGIGVSSNGAKPEVSILGLSEQNFQKANCQIMWVCSVLVDKVFIQTIRCLTGTCPSFLKRGIFMRDSTDGPKVMHRWESFVYSCKYCLGYVKMRFFRHSN.

A disordered region spans residues 1 to 125; that stretch reads MSTYVNDMWP…RSRSRSRGRS (125 aa). Ser12 carries the phosphoserine modification. A compositionally biased stretch (low complexity) spans 20 to 31; the sequence is STSRSGGSSRLS. Basic residues predominate over residues 32–123; that stretch reads SRSRSRSFSR…RSRSRSRSRG (92 aa). A phosphoserine mark is found at Ser109 and Ser111. Position 135 is an omega-N-methylarginine (Arg135).

Belongs to the RSRP family. Post-translationally, phosphorylated. Phosphorylation at Ser-109 and Ser-111 mediates the interaction with spliceosome proteins.

It is found in the nucleus. Its function is as follows. Probably acts as a spliceosomal factor that contributes to spliceosome assembly and regulates the isoform switching of proteins such as PARP6. This chain is Arginine/serine-rich protein 1 (RSRP1), found in Pongo abelii (Sumatran orangutan).